The sequence spans 89 residues: Small ribosomal subunit protein uS15 (89 aa).

This sequence belongs to the universal ribosomal protein uS15 family. Part of the 30S ribosomal subunit. Forms a bridge to the 50S subunit in the 70S ribosome, contacting the 23S rRNA.

One of the primary rRNA binding proteins, it binds directly to 16S rRNA where it helps nucleate assembly of the platform of the 30S subunit by binding and bridging several RNA helices of the 16S rRNA. Functionally, forms an intersubunit bridge (bridge B4) with the 23S rRNA of the 50S subunit in the ribosome. This Chlamydia abortus (strain DSM 27085 / S26/3) (Chlamydophila abortus) protein is Small ribosomal subunit protein uS15.